Here is a 143-residue protein sequence, read N- to C-terminus: Flagellar assembly factor FliW (143 aa).

The protein belongs to the FliW family. In terms of assembly, interacts with translational regulator CsrA and flagellin(s).

The protein resides in the cytoplasm. In terms of biological role, acts as an anti-CsrA protein, binds CsrA and prevents it from repressing translation of its target genes, one of which is flagellin. Binds to flagellin and participates in the assembly of the flagellum. The protein is Flagellar assembly factor FliW of Bacillus velezensis (strain DSM 23117 / BGSC 10A6 / LMG 26770 / FZB42) (Bacillus amyloliquefaciens subsp. plantarum).